Consider the following 67-residue polypeptide: DNA-directed RNA polymerase subunit omega (67 aa).

This sequence belongs to the RNA polymerase subunit omega family. The RNAP catalytic core consists of 2 alpha, 1 beta, 1 beta' and 1 omega subunit. When a sigma factor is associated with the core the holoenzyme is formed, which can initiate transcription.

It carries out the reaction RNA(n) + a ribonucleoside 5'-triphosphate = RNA(n+1) + diphosphate. Promotes RNA polymerase assembly. Latches the N- and C-terminal regions of the beta' subunit thereby facilitating its interaction with the beta and alpha subunits. The sequence is that of DNA-directed RNA polymerase subunit omega from Albidiferax ferrireducens (strain ATCC BAA-621 / DSM 15236 / T118) (Rhodoferax ferrireducens).